Consider the following 1609-residue polypeptide: MNPFESLPDAARPAQGTRPNRSDGPPPLPPLTIPGSTGRPQNPIFSPPPNLHHILPPGYLPQQQQQQQQQQQQQQQRSQQPFFSPPPPDAMSPPLGSHQAYLNSTSSQPTQRLPGISFQEPQRMPVQRSGPSRDSVKSYGDDKRSINDPNSSSTALTQVNSLDPESGFSAHNDTFRRKKSLVRPDRERMDPSHRQWYYRNHAAHMDVMAASGGRVGYMPSTTGHLPQHGAAPHGSGMAGIVGPGGGLSGLGVTGPTNVPPGGLGRAPPLRRGKSLLGRDEDQVETGINVLKRGVSLRRKQSKSGNKPSKEVPRDLGESKTSRIAPGPVGGWMIYCYILTICCPGPFLRIFGIRTPEQQRAWREKMGLIGIITLIMAAVGFLTFGFTQTVCGQQPDRYTLGTIDVGSMTFNGYDYSFDGFIHPQVGPFGADTIYNRTNPIYSEPWSSGGQDGSLLFQKIGAACTGIISNRAGGAQPERYFDCTLVRQDGKGGYANSTMPMCHTGSIVDQFNDGAQPRNSVLKKRGQVSLQWNNVTDPARNLAVYRGSVLDLNRLNNLTTGLSYPELYDTLKRRNDSWAGRDVTSAVMRQRLEREFQCLEQITRVGFIDSETIGCVASKVELYLSLVFIIGVVAIKFFMAVMFGWFISWRLGNYANETYEQRMKRAAEIEQWSDDIYRPAPAGYRPNARKHKSFLPAKSRFSVADPLSLKSGSRAPMPLSEKRMTRASRLGVASPLGGSPPGSPSVAGGRSSASLAPAHSRRSSFSGSPAEGAMGVCPFPLHNTIPQPGPDYRPFGFQLAHSICLVTAYSESFEGLRTTLDSLATTDYPNSHKLLLVIADGIVKGAGSDISTPDICLSMMKDLVIPAEEVEGNSYVAIADGYKRHNMCKIYAGFYDYDDETVERSKQQRVPMILVAKCGTPLEADSAKPGNRGKRDSQVLLMAFMQKVMFDERMTAFEYEFFNSIWRVTGVSPDNYEIVLCVDADTKVFPDSLSRMVACMVEDPEIMGLCGETKIANKSETWVTMIQVFEYYISHHQTKAFEACFGGVTCLPGCFSAYRIKAPKGPHGYWVPILANPDIVEHYSENVVDTLHKKNLLLLGEDRYLTTLMLKTFPKRKMMFVPQAVCKTIVPDTFRILLSQRRRWINSTVHNLFELVMVNDLCGTFCFSMRFVVFMELTGTLVLPAAIAFTLYVVVQAFLPNVPTPTIPLILLALILGLPGILIVVTSRKIAYVGWMLIYLLSLPIWNFVLPLYAYWHMDDFSWGATRVVQGENKKDNHGDADGKFDPSHIVMKRWAEFERERRWKSGTHSRDSTYDVVQRTGSPERAGSTRYSVVSSDTFHSSPFGQHDQFGRALPNAMSSSSASQFGPDVSEVSHSKSPSGARARLDAVPLLELPAPLATDAKHRSGASPTGTVVVPRPRATSPAPLPHNSGHPALGSVSAFSPTQHSAGRLPTLPGAATYEAYPHTDAADEERRPMIGSTSSSPDPEPRRYIGPDAGVRHGNVSTEQRYPTVSESAYPMQAYTAEPETDGSASPTPAQQGFNAANSNQQTRPLTRGFSLVDDGPVASAQGVRQVQRGARRSQMPNSAASPPPANRTGNLPPGAAPPSFD.

Disordered stretches follow at residues 1–188 (MNPF…DRER), 248–280 (SGLG…GRDE), and 294–320 (VSLR…ESKT). Residues 1–326 (MNPFESLPDA…ESKTSRIAPG (326 aa)) lie on the Cytoplasmic side of the membrane. Polar residues predominate over residues 34–44 (PGSTGRPQNPI). Residues 61–82 (PQQQQQQQQQQQQQQQRSQQPF) show a composition bias toward low complexity. The segment covering 100 to 111 (AYLNSTSSQPTQ) has biased composition (polar residues). A compositionally biased stretch (basic and acidic residues) spans 134-146 (DSVKSYGDDKRSI). Residues 147–163 (NDPNSSSTALTQVNSLD) are compositionally biased toward polar residues. Residues 253-267 (TGPTNVPPGGLGRAP) show a composition bias toward low complexity. Positions 307-320 (PSKEVPRDLGESKT) are enriched in basic and acidic residues. The helical transmembrane segment at 327-347 (PVGGWMIYCYILTICCPGPFL) threads the bilayer. Residues 348–364 (RIFGIRTPEQQRAWREK) are Extracellular-facing. The helical transmembrane segment at 365–385 (MGLIGIITLIMAAVGFLTFGF) threads the bilayer. Over 386 to 624 (TQTVCGQQPD…ASKVELYLSL (239 aa)) the chain is Cytoplasmic. The chain crosses the membrane as a helical span at residues 625–645 (VFIIGVVAIKFFMAVMFGWFI). The Extracellular segment spans residues 646–1176 (SWRLGNYANE…MRFVVFMELT (531 aa)). Asparagine 654 carries an N-linked (GlcNAc...) asparagine glycan. The interval 729-767 (GVASPLGGSPPGSPSVAGGRSSASLAPAHSRRSSFSGSP) is disordered. The span at 742–752 (PSVAGGRSSAS) shows a compositional bias: low complexity. N-linked (GlcNAc...) asparagine glycans are attached at residues asparagine 1015 and asparagine 1144. The chain crosses the membrane as a helical span at residues 1177–1197 (GTLVLPAAIAFTLYVVVQAFL). At 1198-1202 (PNVPT) the chain is on the cytoplasmic side. A helical membrane pass occupies residues 1203-1223 (PTIPLILLALILGLPGILIVV). Over 1224 to 1227 (TSRK) the chain is Extracellular. The chain crosses the membrane as a helical span at residues 1228–1248 (IAYVGWMLIYLLSLPIWNFVL). Topologically, residues 1249-1609 (PLYAYWHMDD…PPGAAPPSFD (361 aa)) are cytoplasmic. Disordered regions lie at residues 1354–1381 (PNAM…PSGA) and 1399–1609 (TDAK…PSFD). 2 stretches are compositionally biased toward polar residues: residues 1502 to 1514 (NVST…TVSE) and 1530 to 1552 (GSAS…QTRP). Over residues 1568-1588 (AQGVRQVQRGARRSQMPNSAA) the composition is skewed to low complexity.

This sequence belongs to the chitin synthase family. Class IV subfamily.

It localises to the cell membrane. The protein localises to the cytoplasmic vesicle membrane. It catalyses the reaction [(1-&gt;4)-N-acetyl-beta-D-glucosaminyl](n) + UDP-N-acetyl-alpha-D-glucosamine = [(1-&gt;4)-N-acetyl-beta-D-glucosaminyl](n+1) + UDP + H(+). Its function is as follows. Polymerizes chitin, a structural polymer of the cell wall and septum, by transferring the sugar moiety of UDP-GlcNAc to the non-reducing end of the growing chitin polymer. The protein is Chitin synthase 5 of Mycosarcoma maydis (Corn smut fungus).